Consider the following 108-residue polypeptide: UPF0060 membrane protein RHOS4_03690 (108 aa).

Helical transmembrane passes span 5 to 25 (LAAYAGAALAEIAGCFAVWAW), 32 to 52 (ALWLVPGALSLGTFAWLLALT), 62 to 82 (AVYGGVYVAASLLWLWAVEGV), and 86 to 106 (RWDMGGAALVLAGAAVILWAP).

Belongs to the UPF0060 family.

It is found in the cell inner membrane. The sequence is that of UPF0060 membrane protein RHOS4_03690 from Cereibacter sphaeroides (strain ATCC 17023 / DSM 158 / JCM 6121 / CCUG 31486 / LMG 2827 / NBRC 12203 / NCIMB 8253 / ATH 2.4.1.) (Rhodobacter sphaeroides).